The primary structure comprises 688 residues: Sodium channel and clathrin linker 1 (688 aa).

Position 2 is an N-acetylalanine (alanine 2). Residues 59 to 673 are a coiled coil; sequence LIAEYEKHLE…SASQQLSVIT (615 aa). A Phosphoserine modification is found at serine 681.

Interacts with SCN10A and clathrin. Identified in a complex containing SCN10A, clathrin and SCLT1. As to expression, detected in small neurons in dorsal root ganglia. Detected in C-type fibers of sciatic nerve (at protein level).

Its subcellular location is the cytoplasm. It is found in the cytoskeleton. It localises to the microtubule organizing center. The protein resides in the centrosome. The protein localises to the centriole. Functionally, adapter protein that links SCN10A to clathrin. Regulates SCN10A channel activity, possibly by promoting channel internalization. This Rattus norvegicus (Rat) protein is Sodium channel and clathrin linker 1 (Sclt1).